A 424-amino-acid chain; its full sequence is Proline--tRNA ligase (424 aa).

Belongs to the class-II aminoacyl-tRNA synthetase family. ProS type 2 subfamily. In terms of assembly, homodimer.

The protein resides in the cytoplasm. The catalysed reaction is tRNA(Pro) + L-proline + ATP = L-prolyl-tRNA(Pro) + AMP + diphosphate. In terms of biological role, catalyzes the attachment of proline to tRNA(Pro) in a two-step reaction: proline is first activated by ATP to form Pro-AMP and then transferred to the acceptor end of tRNA(Pro). In Ehrlichia chaffeensis (strain ATCC CRL-10679 / Arkansas), this protein is Proline--tRNA ligase.